A 361-amino-acid polypeptide reads, in one-letter code: MEKLASAKTCLKLLQVMPGVQQAALLPGGGLGVLASPLQNLIQMQQVRHRQTKHWKPEFKRLRKLKFVKMDLPNLREKQEDITKEEMRSRMKERGVLPPRPWMERPFHISCTGGIFEAYVPPEGDGKKSIISTSGAKQKLEFLEKKSKSLMAVRKIRSYDENFSSDDFGAEAQDIYIQAHTHMAAKDKYKIREFVSERCYPEMMHNVKDKTIRWKFLQSLEPPRVVHARVTEVITKENQFAQVTVRFHSQQMLAIYDRFGRLMHGSEIITKDVLEYVVFEKHISNEYGKWRLHDKIIPDWLPAKQPAPITYRLIEDAEEPPKELSAGDAEVKQVDSVGEQSKEQLPLATPVESHTKPSLAI.

Residues 319 to 361 form a disordered region; the sequence is EPPKELSAGDAEVKQVDSVGEQSKEQLPLATPVESHTKPSLAI.

It belongs to the mitochondrion-specific ribosomal protein mL45 family.

It localises to the mitochondrion. The sequence is that of Large ribosomal subunit protein mL45 (mRpL45) from Drosophila melanogaster (Fruit fly).